Consider the following 386-residue polypeptide: Innexin unc-9 (386 aa).

The next 4 membrane-spanning stretches (helical) occupy residues Thr-33–Ile-53, Gln-103–Trp-123, Phe-197–Leu-217, and Ile-282–Phe-302.

Belongs to the pannexin family. Heterooligomer of unc-7 and unc-9. Interacts with F-actin. In terms of tissue distribution, expressed in PLM neurons (at protein level). Expressed in the nerve ring.

The protein localises to the cell membrane. It localises to the cell junction. It is found in the gap junction. In terms of biological role, structural component of gap junctions. Plays a role in maintaining gap junction activity to promote locomotion. The protein is Innexin unc-9 of Caenorhabditis elegans.